We begin with the raw amino-acid sequence, 500 residues long: E3 ubiquitin-protein ligase TRIM69 (500 aa).

A disordered region spans residues 1-22 (MEVSSRPPSNFDPGNYVEMSDP). The interval 1–153 (MEVSSRPPSN…SMGQSKDFLQ (153 aa)) is necessary for nuclear localization. The RING-type zinc-finger motif lies at 42–83 (CPLCNDWFRDPLMLTCGHNFCQDCIQSFWKVHSKETFCPDCK). Residues 217–256 (NKEKDILNDLRDEGKLLNEEMEVNLNQIQEQCLVAKDMLA) adopt a coiled-coil conformation. A B30.2/SPRY domain is found at 306–500 (PIQYIIWKEM…KEPLHIVHPQ (195 aa)). S342 is subject to Phosphoserine.

It belongs to the TRIM/RBCC family. Homo-multimer; required for antiviral activity. Interacts with PML. Phosphorylated. Phosphorylation is necessary for nuclear localization. Expressed in spermatid.

The protein resides in the cytoplasm. It localises to the nucleus. Its subcellular location is the nucleus speckle. It is found in the cytoskeleton. The protein localises to the microtubule organizing center. The protein resides in the centrosome. The enzyme catalyses S-ubiquitinyl-[E2 ubiquitin-conjugating enzyme]-L-cysteine + [acceptor protein]-L-lysine = [E2 ubiquitin-conjugating enzyme]-L-cysteine + N(6)-ubiquitinyl-[acceptor protein]-L-lysine.. It participates in protein modification; protein ubiquitination. E3 ubiquitin ligase that plays an important role in antiviral immunity by restricting different viral infections including dengue virus or vesicular stomatitis indiana virus. Ubiquitinates viral proteins such as dengue virus NS3 thereby limiting infection. In addition, acts as a key mediator of type I interferon induced microtubule stabilization by directly associating to microtubules independently of its E3 ligase activity. Also plays a role in cataract formation together with TP53. Mechanistically, inhibits UVB-induced cell apoptosis and reactive oxygen species (ROS) production by inducing TP53 ubiquitination. Regulates centrosome dynamics and mitotic progression by ubiquitinating STK3/MST2; leading to its redistribution to the perinuclear cytoskeleton and subsequent phosphorylation by PLK1. This chain is E3 ubiquitin-protein ligase TRIM69 (Trim69), found in Mus musculus (Mouse).